A 557-amino-acid polypeptide reads, in one-letter code: Large cysteine-rich periplasmic protein omcB (557 aa).

A signal peptide spans methionine 1–alanine 22. The propeptide occupies serine 23–alanine 40.

In terms of assembly, part of a disulfide cross-linked outer membrane complex (COMC) composed of the major outer membrane porin (MOMP), the small cysteine-rich protein (omcA) and the large cysteine-rich periplasmic protein (omcB).

The protein localises to the periplasm. Functionally, in elementary bodies (EBs, the infectious stage, which is able to survive outside the host cell) provides the structural integrity of the outer envelope through disulfide cross-links with the small cysteine-rich protein and the major outer membrane porin. It has been described in publications as the Sarkosyl-insoluble COMC (Chlamydia outer membrane complex), and serves as the functional equivalent of peptidoglycan. This Chlamydia psittaci (Chlamydophila psittaci) protein is Large cysteine-rich periplasmic protein omcB (omcB).